The chain runs to 395 residues: Oxalate oxidoreductase subunit alpha (395 aa).

In terms of assembly, dimer of heterotrimer of one alpha, one beta and one delta subunit.

The catalysed reaction is oxidized 2[4Fe-4S]-[ferredoxin] + oxalate = reduced 2[4Fe-4S]-[ferredoxin] + 2 CO2. Catalyzes the anaerobic oxidation of oxalate using a broad range of electron acceptors, including ferredoxin and the nickel-dependent carbon monoxide dehydrogenase. Does not require coenzyme A as cosubstrate. Enables anaerobic growth on oxalate which is used as energy source by the bacteria. This is Oxalate oxidoreductase subunit alpha from Moorella thermoacetica (strain ATCC 39073 / JCM 9320).